A 335-amino-acid polypeptide reads, in one-letter code: 4-hydroxy-3-methylbut-2-enyl diphosphate reductase (335 aa).

Cysteine 14 contributes to the [4Fe-4S] cluster binding site. (2E)-4-hydroxy-3-methylbut-2-enyl diphosphate-binding residues include histidine 43 and histidine 81. Positions 43 and 81 each coordinate dimethylallyl diphosphate. Isopentenyl diphosphate is bound by residues histidine 43 and histidine 81. A [4Fe-4S] cluster-binding site is contributed by cysteine 103. Histidine 132 is a binding site for (2E)-4-hydroxy-3-methylbut-2-enyl diphosphate. Position 132 (histidine 132) interacts with dimethylallyl diphosphate. Histidine 132 contributes to the isopentenyl diphosphate binding site. Glutamate 134 (proton donor) is an active-site residue. A (2E)-4-hydroxy-3-methylbut-2-enyl diphosphate-binding site is contributed by threonine 179. Cysteine 209 serves as a coordination point for [4Fe-4S] cluster. (2E)-4-hydroxy-3-methylbut-2-enyl diphosphate is bound by residues serine 237, serine 238, asparagine 239, and serine 285. 4 residues coordinate dimethylallyl diphosphate: serine 237, serine 238, asparagine 239, and serine 285. 4 residues coordinate isopentenyl diphosphate: serine 237, serine 238, asparagine 239, and serine 285.

Belongs to the IspH family. [4Fe-4S] cluster is required as a cofactor.

The enzyme catalyses isopentenyl diphosphate + 2 oxidized [2Fe-2S]-[ferredoxin] + H2O = (2E)-4-hydroxy-3-methylbut-2-enyl diphosphate + 2 reduced [2Fe-2S]-[ferredoxin] + 2 H(+). The catalysed reaction is dimethylallyl diphosphate + 2 oxidized [2Fe-2S]-[ferredoxin] + H2O = (2E)-4-hydroxy-3-methylbut-2-enyl diphosphate + 2 reduced [2Fe-2S]-[ferredoxin] + 2 H(+). It participates in isoprenoid biosynthesis; dimethylallyl diphosphate biosynthesis; dimethylallyl diphosphate from (2E)-4-hydroxy-3-methylbutenyl diphosphate: step 1/1. The protein operates within isoprenoid biosynthesis; isopentenyl diphosphate biosynthesis via DXP pathway; isopentenyl diphosphate from 1-deoxy-D-xylulose 5-phosphate: step 6/6. In terms of biological role, catalyzes the conversion of 1-hydroxy-2-methyl-2-(E)-butenyl 4-diphosphate (HMBPP) into a mixture of isopentenyl diphosphate (IPP) and dimethylallyl diphosphate (DMAPP). Acts in the terminal step of the DOXP/MEP pathway for isoprenoid precursor biosynthesis. In Deinococcus radiodurans (strain ATCC 13939 / DSM 20539 / JCM 16871 / CCUG 27074 / LMG 4051 / NBRC 15346 / NCIMB 9279 / VKM B-1422 / R1), this protein is 4-hydroxy-3-methylbut-2-enyl diphosphate reductase.